The following is a 687-amino-acid chain: Fork-head transcriptional regulator 2 (687 aa).

The interval 1 to 23 (MSAQFITPKKRPHSPLDSNELLP) is disordered. The FHA domain maps to 82–146 (VSIGRNIELS…NGARIDGQKV (65 aa)). Over residues 226–241 (SPSSISANSLQSNLDQ) the composition is skewed to polar residues. Positions 226–246 (SPSSISANSLQSNLDQDLSKE) are disordered. Positions 252 to 350 (KPPYSYATMI…SDGTISKTRR (99 aa)) form a DNA-binding region, fork-head. Disordered stretches follow at residues 385–449 (AASI…RYTP), 472–569 (QLGR…IGLN), and 584–687 (PERG…MIDS). Over residues 389 to 410 (PQQQKQQQQQQKRPPQQQNSQP) the composition is skewed to low complexity. Residues 411 to 442 (HLSQPHYTIPSNPMQTNSMGYIPQSNIYNMSN) are compositionally biased toward polar residues. The span at 472–490 (QLGRPQGQLGQPMMQPQQQ) shows a compositional bias: low complexity. Positions 491-540 (SYTSSNIKTEPSSPKRNPSISNNTPKMAKGTVSTESHSRSTSYTTTQLHE) are enriched in polar residues. 2 stretches are compositionally biased toward low complexity: residues 542–563 (SNFN…TTTN) and 589–624 (KGNP…PNTN). Residues 625 to 659 (QSSPAFWNFVQFSTPNGQSPVRKSSEEVGNNSPTL) are compositionally biased toward polar residues. A Nuclear localization signal motif is present at residues 663–670 (IKREREND).

The protein localises to the nucleus. Its function is as follows. Transcription factor required for the morphogenesis of true hyphal as well as yeast cells. Contributes to virulence. This Candida albicans (strain SC5314 / ATCC MYA-2876) (Yeast) protein is Fork-head transcriptional regulator 2 (FKH2).